The primary structure comprises 500 residues: Probable cytochrome P450 514A2 (500 aa).

The chain crosses the membrane as a helical span at residues 4-24; the sequence is IYTIILTIIILVLIISIKDLF. Cys446 is a binding site for heme.

It belongs to the cytochrome P450 family. Heme serves as cofactor.

Its subcellular location is the membrane. This chain is Probable cytochrome P450 514A2 (cyp514A2), found in Dictyostelium discoideum (Social amoeba).